The sequence spans 52 residues: Unknown protein from spot 415 of 2D-PAGE of etiolated coleoptile (52 aa).

This Zea mays (Maize) protein is Unknown protein from spot 415 of 2D-PAGE of etiolated coleoptile.